Consider the following 216-residue polypeptide: UPF0323 lipoprotein HPAG1_0235 (216 aa).

Positions 1–27 (MKKPYRKISDYAIVGGLSALVMVSIVG) are cleaved as a signal peptide. Cysteine 28 is lipidated: N-palmitoyl cysteine. Cysteine 28 is lipidated: S-diacylglycerol cysteine. Residues 159-196 (QRTYKSPQAYQRSQNSFSKSAPSASGMGTASKGQSGFF) are compositionally biased toward polar residues. Positions 159 to 216 (QRTYKSPQAYQRSQNSFSKSAPSASGMGTASKGQSGFFGSSRPTSSPAVSSGTRGFNA) are disordered. Residues 198–209 (SSRPTSSPAVSS) show a composition bias toward low complexity.

This sequence belongs to the UPF0323 family.

The protein resides in the cell membrane. The sequence is that of UPF0323 lipoprotein HPAG1_0235 from Helicobacter pylori (strain HPAG1).